Consider the following 98-residue polypeptide: Large ribosomal subunit protein uL23 (98 aa).

Belongs to the universal ribosomal protein uL23 family. As to quaternary structure, part of the 50S ribosomal subunit. Contacts protein L29, and trigger factor when it is bound to the ribosome.

One of the early assembly proteins it binds 23S rRNA. One of the proteins that surrounds the polypeptide exit tunnel on the outside of the ribosome. Forms the main docking site for trigger factor binding to the ribosome. This is Large ribosomal subunit protein uL23 from Bordetella avium (strain 197N).